A 161-amino-acid polypeptide reads, in one-letter code: Putative esterase C31F10.02 (161 aa).

It belongs to the thioesterase PaaI family.

This chain is Putative esterase C31F10.02, found in Schizosaccharomyces pombe (strain 972 / ATCC 24843) (Fission yeast).